The following is a 428-amino-acid chain: 5'-nucleotidase domain-containing protein 4 (428 aa).

Residue D22 is the Nucleophile of the active site. Mg(2+)-binding residues include D22, D24, and D317. The active-site Proton donor is the D24.

It belongs to the 5'(3')-deoxyribonucleotidase family.

This Homo sapiens (Human) protein is 5'-nucleotidase domain-containing protein 4 (NT5DC4).